We begin with the raw amino-acid sequence, 514 residues long: Bifunctional purine biosynthesis protein PurH (514 aa).

In terms of domain architecture, MGS-like spans 1–145 (MIKRALISVS…KNYQDVVVIV (145 aa)).

Belongs to the PurH family.

It carries out the reaction (6R)-10-formyltetrahydrofolate + 5-amino-1-(5-phospho-beta-D-ribosyl)imidazole-4-carboxamide = 5-formamido-1-(5-phospho-D-ribosyl)imidazole-4-carboxamide + (6S)-5,6,7,8-tetrahydrofolate. The catalysed reaction is IMP + H2O = 5-formamido-1-(5-phospho-D-ribosyl)imidazole-4-carboxamide. It functions in the pathway purine metabolism; IMP biosynthesis via de novo pathway; 5-formamido-1-(5-phospho-D-ribosyl)imidazole-4-carboxamide from 5-amino-1-(5-phospho-D-ribosyl)imidazole-4-carboxamide (10-formyl THF route): step 1/1. Its pathway is purine metabolism; IMP biosynthesis via de novo pathway; IMP from 5-formamido-1-(5-phospho-D-ribosyl)imidazole-4-carboxamide: step 1/1. The chain is Bifunctional purine biosynthesis protein PurH from Acetivibrio thermocellus (strain ATCC 27405 / DSM 1237 / JCM 9322 / NBRC 103400 / NCIMB 10682 / NRRL B-4536 / VPI 7372) (Clostridium thermocellum).